The sequence spans 288 residues: 4-diphosphocytidyl-2-C-methyl-D-erythritol kinase (288 aa).

Lysine 13 is a catalytic residue. 96-106 (PMGGGIGGGSS) lines the ATP pocket. The active site involves aspartate 138.

The protein belongs to the GHMP kinase family. IspE subfamily.

It carries out the reaction 4-CDP-2-C-methyl-D-erythritol + ATP = 4-CDP-2-C-methyl-D-erythritol 2-phosphate + ADP + H(+). Its pathway is isoprenoid biosynthesis; isopentenyl diphosphate biosynthesis via DXP pathway; isopentenyl diphosphate from 1-deoxy-D-xylulose 5-phosphate: step 3/6. Catalyzes the phosphorylation of the position 2 hydroxy group of 4-diphosphocytidyl-2C-methyl-D-erythritol. This chain is 4-diphosphocytidyl-2-C-methyl-D-erythritol kinase, found in Aliivibrio fischeri (strain MJ11) (Vibrio fischeri).